A 283-amino-acid chain; its full sequence is uncharacterized protein (283 aa).

The active-site Proton donor is tyrosine 55.

Belongs to the aldo/keto reductase family.

It is found in the cytoplasm. Its subcellular location is the nucleus. This is an uncharacterized protein from Schizosaccharomyces pombe (strain 972 / ATCC 24843) (Fission yeast).